The chain runs to 120 residues: MFYWILLALAIIAEITGTLSMKWASVSGGHTGFILMLAMIALSYIFLAFAVKKIALGVAYALWEGIGILLITLFSVLLFDESLSLLKIAGLTTLVIGIVLIKSGTQKKASSKQEVAHAAV.

The next 4 helical transmembrane spans lie at 1–21 (MFYWILLALAIIAEITGTLSM), 31–51 (TGFILMLAMIALSYIFLAFAV), 54–74 (IALGVAYALWEGIGILLITLF), and 81–101 (ESLSLLKIAGLTTLVIGIVLI).

This sequence belongs to the drug/metabolite transporter (DMT) superfamily. Small multidrug resistance (SMR) (TC 2.A.7.1) family. MdtJ subfamily. In terms of assembly, forms a complex with MdtI.

It localises to the cell inner membrane. In terms of biological role, catalyzes the excretion of spermidine. In Klebsiella pneumoniae subsp. pneumoniae (strain ATCC 700721 / MGH 78578), this protein is Spermidine export protein MdtJ.